Consider the following 197-residue polypeptide: Adenylate kinase (197 aa).

16-21 (GAGKGT) serves as a coordination point for ATP. The NMP stretch occupies residues 36–65 (STGDILRDHVARGTALGQQAGPLMEAGQLV). Residues Thr-37, Arg-42, 63 to 65 (QLV), 90 to 93 (GFPR), and Gln-97 contribute to the AMP site. The interval 131–147 (DRGRQAVAEGRAPRADD) is LID. Arg-132 provides a ligand contact to ATP. The segment at 137-158 (VAEGRAPRADDNEETARKRQQV) is disordered. Over residues 141-153 (RAPRADDNEETAR) the composition is skewed to basic and acidic residues. Residues Arg-144 and Arg-155 each contribute to the AMP site. ATP is bound at residue Gly-183.

This sequence belongs to the adenylate kinase family. As to quaternary structure, monomer.

It localises to the cytoplasm. The enzyme catalyses AMP + ATP = 2 ADP. Its pathway is purine metabolism; AMP biosynthesis via salvage pathway; AMP from ADP: step 1/1. In terms of biological role, catalyzes the reversible transfer of the terminal phosphate group between ATP and AMP. Plays an important role in cellular energy homeostasis and in adenine nucleotide metabolism. The protein is Adenylate kinase of Deinococcus radiodurans (strain ATCC 13939 / DSM 20539 / JCM 16871 / CCUG 27074 / LMG 4051 / NBRC 15346 / NCIMB 9279 / VKM B-1422 / R1).